Reading from the N-terminus, the 107-residue chain is MKWIVIDTVIQPTCGISFSAIWGNMKMIIWYQSTIFLPPGSIFTPVKSGIILKDKEYPITIYHIAPFNKDLWSLLKSSQECPPGESKITNKCLHNSCIIKICPYGLK.

The protein belongs to the IraM/RssC family.

It is found in the cytoplasm. Functionally, inhibits RpoS proteolysis by regulating RssB activity, thereby increasing the stability of the sigma stress factor RpoS during magnesium starvation. The chain is Anti-adapter protein IraM from Escherichia coli (strain K12 / MC4100 / BW2952).